The chain runs to 252 residues: NAD-dependent protein deacetylase (252 aa).

Residues 2-243 (DSKRDEKILE…DRVVKELKKI (242 aa)) enclose the Deacetylase sirtuin-type domain. NAD(+)-binding residues include Ala-28, Thr-32, Phe-39, Arg-40, Gln-109, Ile-111, Asp-112, and His-127. Phe-39 serves as a coordination point for nicotinamide. Ile-111 and Asp-112 together coordinate nicotinamide. His-127 serves as the catalytic Proton acceptor. Zn(2+) is bound by residues Cys-135, Cys-138, Cys-148, and Cys-150. Positions 188, 189, and 211 each coordinate NAD(+).

Belongs to the sirtuin family. Class U subfamily. The cofactor is Zn(2+).

Its subcellular location is the cytoplasm. It carries out the reaction N(6)-acetyl-L-lysyl-[protein] + NAD(+) + H2O = 2''-O-acetyl-ADP-D-ribose + nicotinamide + L-lysyl-[protein]. In terms of biological role, NAD-dependent protein deacetylase which modulates the activities of several enzymes which are inactive in their acetylated form. In Fusobacterium nucleatum subsp. nucleatum (strain ATCC 25586 / DSM 15643 / BCRC 10681 / CIP 101130 / JCM 8532 / KCTC 2640 / LMG 13131 / VPI 4355), this protein is NAD-dependent protein deacetylase.